Reading from the N-terminus, the 266-residue chain is Protein PYRICULARIA ORYZAE RESISTANCE 21 (266 aa).

The 68-residue stretch at 1-68 (MGILVILVDL…IWCKAGKIIK (68 aa)) folds into the HMA domain. Residues Cys-12 and Cys-15 each contribute to the a metal cation site. Positions 129–156 (CEKPKPCEKPPPCKPEEPPKPPPEKPPP) are disordered. The segment covering 142–156 (KPEEPPKPPPEKPPP) has biased composition (basic and acidic residues).

Involved in defense responses. Contributes to slowing defense responses toward Magnaporthe oryzae. The chain is Protein PYRICULARIA ORYZAE RESISTANCE 21 from Oryza sativa subsp. japonica (Rice).